The following is a 238-amino-acid chain: Purine nucleoside phosphorylase DeoD-type (238 aa).

Position 4 (His-4) interacts with a purine D-ribonucleoside. Phosphate-binding positions include Gly-20, Arg-24, Arg-43, and 87-90 (RVGT). Residues 179–181 (EME) and 203–204 (SN) contribute to the a purine D-ribonucleoside site.

The protein belongs to the PNP/UDP phosphorylase family. As to quaternary structure, homohexamer; trimer of homodimers.

The catalysed reaction is a purine D-ribonucleoside + phosphate = a purine nucleobase + alpha-D-ribose 1-phosphate. It carries out the reaction a purine 2'-deoxy-D-ribonucleoside + phosphate = a purine nucleobase + 2-deoxy-alpha-D-ribose 1-phosphate. In terms of biological role, catalyzes the reversible phosphorolytic breakdown of the N-glycosidic bond in the beta-(deoxy)ribonucleoside molecules, with the formation of the corresponding free purine bases and pentose-1-phosphate. This chain is Purine nucleoside phosphorylase DeoD-type, found in Lacticaseibacillus casei (strain BL23) (Lactobacillus casei).